The sequence spans 312 residues: MSISESPKKHPVLLIAGPTASGKSQLAIAMGIKTNGIIINADASQLYTDLQILTARPSDADEKILPHRLFGIQDGSEPASAVFWAELAKKEIKNAHESGRLPILVGGTGLYIRTLLEGIAPIPDIAPELREEVRSMSVEEAYSALQQEDPMAADRLRPTDKTRIMRALEVMRSTGHPLHYWQQKKTGGIANEIKLQSFVIIPPANILRSRCDKRFDQMLEQGAEKEVIRLMGRQLPADLPIMRAIGVREIASYIRGEIDRLTMIEKAKAATRQYAKRQRTWFRHQTDESWIKIFDDINFKKIDDFAIKLLSI.

Residue 17 to 24 coordinates ATP; it reads GPTASGKS. 19 to 24 contacts substrate; sequence TASGKS.

This sequence belongs to the IPP transferase family. In terms of assembly, monomer. The cofactor is Mg(2+).

The enzyme catalyses adenosine(37) in tRNA + dimethylallyl diphosphate = N(6)-dimethylallyladenosine(37) in tRNA + diphosphate. In terms of biological role, catalyzes the transfer of a dimethylallyl group onto the adenine at position 37 in tRNAs that read codons beginning with uridine, leading to the formation of N6-(dimethylallyl)adenosine (i(6)A). The polypeptide is tRNA dimethylallyltransferase (Zymomonas mobilis subsp. mobilis (strain ATCC 31821 / ZM4 / CP4)).